Reading from the N-terminus, the 259-residue chain is 1,2-dihydroxy-1,2-dihydronaphthalene dehydrogenase (259 aa).

NAD(+) is bound by residues 8–35 (AITG…SALV) and Asp-58. Ser-140 is a binding site for substrate. The active-site Proton acceptor is Tyr-153. An NAD(+)-binding site is contributed by Lys-157.

The protein belongs to the short-chain dehydrogenases/reductases (SDR) family.

It carries out the reaction (1R,2S)-1,2-dihydronaphthalene-1,2-diol + NAD(+) = naphthalene-1,2-diol + NADH + H(+). It functions in the pathway aromatic compound metabolism; naphthalene degradation. Its function is as follows. Catalyzes the oxidation of naphthalene dihydrodiol into 1,2-dihydroxynaphthalene. This Ralstonia sp protein is 1,2-dihydroxy-1,2-dihydronaphthalene dehydrogenase.